The chain runs to 65 residues: Weak toxin CM-11 (65 aa).

5 disulfides stabilise this stretch: C3/C24, C6/C11, C17/C42, C46/C57, and C58/C63.

The protein belongs to the three-finger toxin family. Ancestral subfamily. Orphan group II sub-subfamily. Expressed by the venom gland.

The protein localises to the secreted. Its function is as follows. Binds with low affinity to muscular (alpha-1-beta-1-delta-epsilon/CHRNA1-CHRNB1-CHRND-CHRNE) and very low affinity to neuronal (alpha-7/CHRNA7) nicotinic acetylcholine receptor (nAChR). This Naja haje haje (Egyptian cobra) protein is Weak toxin CM-11.